The sequence spans 122 residues: Large ribosomal subunit protein uL14 (122 aa).

Belongs to the universal ribosomal protein uL14 family. In terms of assembly, part of the 50S ribosomal subunit. Forms a cluster with proteins L3 and L19. In the 70S ribosome, L14 and L19 interact and together make contacts with the 16S rRNA in bridges B5 and B8.

Functionally, binds to 23S rRNA. Forms part of two intersubunit bridges in the 70S ribosome. In Rhodococcus jostii (strain RHA1), this protein is Large ribosomal subunit protein uL14.